The primary structure comprises 305 residues: Pseudouridine-5'-phosphate glycosidase (305 aa).

Glu22 (proton donor) is an active-site residue. Positions 84 and 104 each coordinate substrate. Asp136 lines the Mn(2+) pocket. 138 to 140 lines the substrate pocket; that stretch reads SAD. The active-site Nucleophile is Lys157.

This sequence belongs to the pseudouridine-5'-phosphate glycosidase family. Homotrimer. Requires Mn(2+) as cofactor.

It catalyses the reaction D-ribose 5-phosphate + uracil = psi-UMP + H2O. Its function is as follows. Catalyzes the reversible cleavage of pseudouridine 5'-phosphate (PsiMP) to ribose 5-phosphate and uracil. Functions biologically in the cleavage direction, as part of a pseudouridine degradation pathway. The sequence is that of Pseudouridine-5'-phosphate glycosidase from Chloroflexus aurantiacus (strain ATCC 29364 / DSM 637 / Y-400-fl).